The following is a 681-amino-acid chain: DNA-directed RNA polymerase subunit beta' (681 aa).

4 residues coordinate Zn(2+): cysteine 69, cysteine 71, cysteine 87, and cysteine 90. Positions 489, 491, and 493 each coordinate Mg(2+).

The protein belongs to the RNA polymerase beta' chain family. RpoC1 subfamily. In terms of assembly, in plastids the minimal PEP RNA polymerase catalytic core is composed of four subunits: alpha, beta, beta', and beta''. When a (nuclear-encoded) sigma factor is associated with the core the holoenzyme is formed, which can initiate transcription. Mg(2+) is required as a cofactor. Zn(2+) serves as cofactor.

It localises to the plastid. It is found in the chloroplast. The enzyme catalyses RNA(n) + a ribonucleoside 5'-triphosphate = RNA(n+1) + diphosphate. In terms of biological role, DNA-dependent RNA polymerase catalyzes the transcription of DNA into RNA using the four ribonucleoside triphosphates as substrates. This Anthoceros angustus (Hornwort) protein is DNA-directed RNA polymerase subunit beta'.